The sequence spans 429 residues: Enolase (429 aa).

Q163 contacts (2R)-2-phosphoglycerate. The active-site Proton donor is the E205. The Mg(2+) site is built by D242, E286, and D313. Positions 338, 367, 368, and 389 each coordinate (2R)-2-phosphoglycerate. K338 (proton acceptor) is an active-site residue.

The protein belongs to the enolase family. The cofactor is Mg(2+).

The protein resides in the cytoplasm. The protein localises to the secreted. It localises to the cell surface. The enzyme catalyses (2R)-2-phosphoglycerate = phosphoenolpyruvate + H2O. Its pathway is carbohydrate degradation; glycolysis; pyruvate from D-glyceraldehyde 3-phosphate: step 4/5. Functionally, catalyzes the reversible conversion of 2-phosphoglycerate (2-PG) into phosphoenolpyruvate (PEP). It is essential for the degradation of carbohydrates via glycolysis. The sequence is that of Enolase from Thermoanaerobacter sp. (strain X514).